The following is a 455-amino-acid chain: Kynurenine--oxoglutarate transaminase 3 (455 aa).

Glycine 72 serves as a coordination point for substrate. Residue lysine 117 is modified to N6-acetyllysine; alternate. Lysine 117 bears the N6-succinyllysine; alternate mark. Residue asparagine 219 participates in substrate binding. Lysine 281 is subject to N6-(pyridoxal phosphate)lysine. Arginine 430 lines the substrate pocket.

Belongs to the class-I pyridoxal-phosphate-dependent aminotransferase family. In terms of assembly, homodimer. The cofactor is pyridoxal 5'-phosphate. Widely expressed, with higher expression levels in liver, kidney, heart and neuroendocrine tissues.

The enzyme catalyses L-kynurenine + 2-oxoglutarate = kynurenate + L-glutamate + H2O. The catalysed reaction is L-kynurenine + glyoxylate = kynurenate + glycine + H2O. It carries out the reaction 3-hydroxy-L-kynurenine + glyoxylate = xanthurenate + glycine + H2O. It catalyses the reaction an S-substituted L-cysteine + H2O = a thiol + pyruvate + NH4(+). Its pathway is amino-acid degradation; L-kynurenine degradation; kynurenate from L-kynurenine: step 1/2. Kynurenine transamination is competitively inhibited by cysteine, glutamine, histidine, methionine, leucine, or phenylalanine. In terms of biological role, catalyzes the irreversible transamination of the L-tryptophan metabolite L-kynurenine to form kynurenic acid (KA), an intermediate in the tryptophan catabolic pathway which is also a broad spectrum antagonist of the three ionotropic excitatory amino acid receptors among others. May catalyze the beta-elimination of S-conjugates and Se-conjugates of L-(seleno)cysteine, resulting in the cleavage of the C-S or C-Se bond. Has transaminase activity towards L-kynurenine, tryptophan, phenylalanine, serine, cysteine, methionine, histidine, glutamine and asparagine with glyoxylate as an amino group acceptor (in vitro). Has lower activity with 2-oxoglutarate as amino group acceptor (in vitro). In Mus musculus (Mouse), this protein is Kynurenine--oxoglutarate transaminase 3 (Kyat3).